Reading from the N-terminus, the 538-residue chain is Chaperonin GroEL (538 aa).

Residues 30-33 (TLGP), 87-91 (DGTTT), Gly-415, 479-481 (DAA), and Asp-495 each bind ATP.

The protein belongs to the chaperonin (HSP60) family. Forms a cylinder of 14 subunits composed of two heptameric rings stacked back-to-back. Interacts with the co-chaperonin GroES.

Its subcellular location is the cytoplasm. The catalysed reaction is ATP + H2O + a folded polypeptide = ADP + phosphate + an unfolded polypeptide.. Together with its co-chaperonin GroES, plays an essential role in assisting protein folding. The GroEL-GroES system forms a nano-cage that allows encapsulation of the non-native substrate proteins and provides a physical environment optimized to promote and accelerate protein folding. This Dictyoglomus thermophilum (strain ATCC 35947 / DSM 3960 / H-6-12) protein is Chaperonin GroEL.